The chain runs to 293 residues: Serine/threonine-protein phosphatase 2A catalytic subunit beta isoform (293 aa).

Asp-41, His-43, Asp-69, and Asn-101 together coordinate Mn(2+). Catalysis depends on His-102, which acts as the Proton donor. Mn(2+) is bound by residues His-151 and His-225. The residue at position 291 (Tyr-291) is a Phosphotyrosine. Leucine methyl ester is present on Leu-293.

The protein belongs to the PPP phosphatase family. PP-1 subfamily. In terms of assembly, found in a complex with at least ARL2, PPP2CB, PPP2R1A, PPP2R2A, PPP2R5E and TBCD. Interacts with TBCD. PP2A consists of a common heterodimeric core enzyme (composed of a 36 kDa catalytic subunit (subunit C) and a 65 kDa constant regulatory subunit (PR65) (subunit A)) that associates with a variety of regulatory subunits. Proteins that associate with the core dimer include three families of regulatory subunits B (the R2/B/PR55/B55, R3/B''/PR72/PR130/PR59 and R5/B'/B56 families), the 48 kDa variable regulatory subunit, viral proteins, and cell signaling molecules. Binds PPME1. May indirectly interact with SGO1, most probably through regulatory B56 subunits. Interacts with CTTNBP2NL. Interacts with PTPA. Part of the core of STRIPAK complexes composed of PP2A catalytic and scaffolding subunits, the striatins (PP2A regulatory subunits), the striatin-associated proteins MOB4, STRIP1 and STRIP2, PDCD10 and members of the STE20 kinases, such as STK24 and STK26. The cofactor is Mn(2+). In terms of processing, reversibly methyl esterified on Leu-293 by leucine carboxyl methyltransferase 1 (Lcmt1) and protein phosphatase methylesterase 1 (PPME1). Carboxyl methylation influences the affinity of the catalytic subunit for the different regulatory subunits, thereby modulating the PP2A holoenzyme's substrate specificity, enzyme activity and cellular localization. Post-translationally, phosphorylation of either threonine (by autophosphorylation-activated protein kinase) or tyrosine results in inactivation of the phosphatase. Auto-dephosphorylation has been suggested as a mechanism for reactivation. May be monoubiquitinated by NOSIP.

It is found in the cytoplasm. The protein resides in the nucleus. It localises to the chromosome. The protein localises to the centromere. Its subcellular location is the cytoskeleton. It is found in the spindle pole. The enzyme catalyses O-phospho-L-seryl-[protein] + H2O = L-seryl-[protein] + phosphate. It carries out the reaction O-phospho-L-threonyl-[protein] + H2O = L-threonyl-[protein] + phosphate. Its function is as follows. Catalytic subunit of protein phosphatase 2A (PP2A), a serine/threonine phosphatase involved in the regulation of a wide variety of enzymes, signal transduction pathways, and cellular events. PP2A can modulate the activity of phosphorylase B kinase, casein kinase 2, mitogen-stimulated S6 kinase, and MAP-2 kinase. Part of the striatin-interacting phosphatase and kinase (STRIPAK) complexes. STRIPAK complexes have critical roles in protein (de)phosphorylation and are regulators of multiple signaling pathways including Hippo, MAPK, nuclear receptor and cytoskeleton remodeling. Different types of STRIPAK complexes are involved in a variety of biological processes such as cell growth, differentiation, apoptosis, metabolism and immune regulation. This is Serine/threonine-protein phosphatase 2A catalytic subunit beta isoform (PPP2CB) from Sus scrofa (Pig).